A 106-amino-acid chain; its full sequence is Secreted RxLR effector protein 18 (106 aa).

Residues 1–17 (MRGSTAMLLAAIALFSS) form the signal peptide. A RxLR-dEER motif is present at residues 28 to 39 (RTLRSFEELEER).

The protein belongs to the RxLR effector family.

It localises to the secreted. It is found in the host cell. Functionally, effector that may act as a suppressor of cell death to interrupt plant immunity. I. This Plasmopara viticola (Downy mildew of grapevine) protein is Secreted RxLR effector protein 18.